We begin with the raw amino-acid sequence, 576 residues long: Sulfite reductase [NADPH] hemoprotein beta-component (576 aa).

[4Fe-4S] cluster-binding residues include cysteine 435, cysteine 441, cysteine 480, and cysteine 484. Cysteine 484 is a binding site for siroheme.

The protein belongs to the nitrite and sulfite reductase 4Fe-4S domain family. In terms of assembly, alpha(8)-beta(8). The alpha component is a flavoprotein, the beta component is a hemoprotein. The cofactor is siroheme. [4Fe-4S] cluster is required as a cofactor.

It catalyses the reaction hydrogen sulfide + 3 NADP(+) + 3 H2O = sulfite + 3 NADPH + 4 H(+). It participates in sulfur metabolism; hydrogen sulfide biosynthesis; hydrogen sulfide from sulfite (NADPH route): step 1/1. Functionally, component of the sulfite reductase complex that catalyzes the 6-electron reduction of sulfite to sulfide. This is one of several activities required for the biosynthesis of L-cysteine from sulfate. This Photorhabdus laumondii subsp. laumondii (strain DSM 15139 / CIP 105565 / TT01) (Photorhabdus luminescens subsp. laumondii) protein is Sulfite reductase [NADPH] hemoprotein beta-component.